A 102-amino-acid chain; its full sequence is RNA-binding protein Hfq (102 aa).

The Sm domain occupies 9 to 68 (DPFLNALRRERVPVSIYLVNGIKLQGQIESFDQFVILLKNTVSQMVYKHAISTVVPSRPV). Positions 63–102 (VPSRPVSHHSNNAGGGTSSNYHHGSSAQNTSAQQDSEETE) are disordered. The span at 70 to 96 (HHSNNAGGGTSSNYHHGSSAQNTSAQQ) shows a compositional bias: polar residues.

Belongs to the Hfq family. As to quaternary structure, homohexamer.

Functionally, RNA chaperone that binds small regulatory RNA (sRNAs) and mRNAs to facilitate mRNA translational regulation in response to envelope stress, environmental stress and changes in metabolite concentrations. Also binds with high specificity to tRNAs. The polypeptide is RNA-binding protein Hfq (Escherichia fergusonii (strain ATCC 35469 / DSM 13698 / CCUG 18766 / IAM 14443 / JCM 21226 / LMG 7866 / NBRC 102419 / NCTC 12128 / CDC 0568-73)).